The primary structure comprises 2190 residues: Non-reducing polyketide synthase mapC' (2190 aa).

The N-terminal acylcarrier protein transacylase domain (SAT) stretch occupies residues valine 14–glutamine 268. The Ketosynthase family 3 (KS3) domain occupies alanine 401–glutamate 817. Catalysis depends on for beta-ketoacyl synthase activity residues cysteine 566, histidine 701, and histidine 740. The segment at cysteine 893–glycine 1190 is malonyl-CoA:ACP transacylase (MAT) domain. Catalysis depends on serine 979, which acts as the For acyl/malonyl transferase activity. The interval glycine 1243–serine 1375 is N-terminal hotdog fold. A PKS/mFAS DH domain is found at glycine 1243–threonine 1552. Residues glutamine 1251–alanine 1556 form a product template (PT) domain region. The active-site Proton acceptor; for dehydratase activity is the histidine 1277. Residues alanine 1401–threonine 1552 are C-terminal hotdog fold. Residue aspartate 1458 is the Proton donor; for dehydratase activity of the active site. Positions alanine 1597–histidine 1671 constitute a Carrier domain. Serine 1631 is modified (O-(pantetheine 4'-phosphoryl)serine). The segment at alanine 1840–histidine 2187 is methyltransferase (CMeT) domain. Catalysis depends on for thioesterase activity residues serine 1969, aspartate 2127, and histidine 2159.

It localises to the cytoplasm. The protein localises to the cytosol. It carries out the reaction 3 malonyl-CoA + acetyl-CoA + S-adenosyl-L-methionine + H(+) = 5-methylorsellinate + S-adenosyl-L-homocysteine + 3 CO2 + 4 CoA. The protein operates within secondary metabolite biosynthesis; terpenoid biosynthesis. Functionally, non-reducing polyketide synthase; part of the gene cluster that mediates the biosynthesis of mycophenolic acid (MPA), the first isolated antibiotic natural product in the world obtained from a culture of Penicillium brevicompactum in 1893. MpaC' catalyzes the synthesis of 5-methylorsellinic acid (5MOA) via the condensation of 1 acetyl-CoA starter unit with 3 malonyl-CoA units and one methylation step. The first step of the pathway is the synthesis of 5-methylorsellinic acid (5MOA) by the cytosolic polyketide synthase mpaC. 5MOA is then converted to the phthalide compound 5,7-dihydroxy-4,6-dimethylphthalide (DHMP) by the endoplasmic reticulum-bound cytochrome P450 monooxygenase mpaDE. MpaDE first catalyzes hydroxylation of 5-MOA to 4,6-dihydroxy-2-(hydroxymethyl)-3-methylbenzoic acid (DHMB). MpaDE then acts as a lactone synthase that catalyzes the ring closure to convert DHMB into DHMP. The next step is the prenylation of DHMP by the Golgi apparatus-associated prenyltransferase mpaA to yield farnesyl-DHMP (FDHMP). The ER-bound oxygenase mpaB then mediates the oxidative cleavage the C19-C20 double bond in FDHMP to yield FDHMP-3C via a mycophenolic aldehyde intermediate. The O-methyltransferase mpaG catalyzes the methylation of FDHMP-3C to yield MFDHMP-3C. After the cytosolic methylation of FDHMP-3C, MFDHMP-3C enters into peroxisomes probably via free diffusion due to its low molecular weight. Upon a peroxisomal CoA ligation reaction, catalyzed by a beta-oxidation component enzyme acyl-CoA ligase ACL891, MFDHMP-3C-CoA would then be restricted to peroxisomes for the following beta-oxidation pathway steps. The peroxisomal beta-oxidation machinery than converts MFDHMP-3C-CoA into MPA_CoA, via a beta-oxidation chain-shortening process. Finally mpaH acts as a peroxisomal acyl-CoA hydrolase with high substrate specificity toward MPA-CoA to release the final product MPA. The sequence is that of Non-reducing polyketide synthase mapC' from Penicillium brevicompactum.